A 1630-amino-acid polypeptide reads, in one-letter code: Histone transcription regulator 3 homolog (1630 aa).

A TPR 1 repeat occupies 8–42; that stretch reads NAASEDLDKEKRTLEIRIEEAVQIYQNALSAQKQG. The segment at 325 to 347 is disordered; it reads KDIVPPPSDNLPKPQLLKRPIDD. The stretch at 1230–1263 is one TPR 2 repeat; the sequence is WRALYMLGKACRKCGDMENALVHFEAAAALAPTK.

It belongs to the HIR3 family. Interacts with hip1 and slm9.

The protein resides in the nucleus. Its function is as follows. Has a role in a nucleosome assembly pathway that is required for the integrity of heterochromatin and proper chromosome segregation. Required for transcriptional silencing in the outer repeat (otr) region of centromeric repeats and the Tf2 long terminal repeat retrotransposons. The sequence is that of Histone transcription regulator 3 homolog (hip3) from Schizosaccharomyces pombe (strain 972 / ATCC 24843) (Fission yeast).